The sequence spans 1481 residues: Cystic fibrosis transmembrane conductance regulator (1481 aa).

At 1–77 (MQKSPLEKAG…KLINALRRCF (77 aa)) the chain is on the cytoplasmic side. A helical membrane pass occupies residues 78–98 (FWRFMFYGILLYLGEVTKAVQ). The ABC transmembrane type-1 1 domain occupies 81 to 365 (FMFYGILLYL…WAVQTWYDSL (285 aa)). Topologically, residues 99–122 (PLLLGRIIASYDPDNKVERSIAIY) are extracellular. The chain crosses the membrane as a helical span at residues 123 to 146 (LGIGLCLLFVVRTLLLHPAIFGLH). Residues 147-195 (HIGMQMRIAMFSLIYKKTLKLSSRVLDKISIGQLISLLSNNLNKFDEGL) are Cytoplasmic-facing. A helical transmembrane segment spans residues 196 to 216 (ALAHFVWISPLQVTLLMGLLW). The Extracellular portion of the chain corresponds to 217-222 (ELLQAS). A helical membrane pass occupies residues 223–243 (AFCGLAFLIVLALVQAGLGRM). Residues 244 to 298 (MMKYRDQRAGKINERLVITSEMIENIQSVKAYCWEEAMEKMIENLRQTELKLTRK) are Cytoplasmic-facing. The chain crosses the membrane as a helical span at residues 299-319 (AAYVRYFNSSAFFFSGFFVVF). Topologically, residues 320–339 (LSVLPYALTKGIILRKIFTT) are extracellular. A helical membrane pass occupies residues 340 to 358 (ISFCIVLRMAVTRQFPWAV). At 359-858 (QTWYDSLGAI…YLRYITVHRS (500 aa)) the chain is on the cytoplasmic side. Residues Trp401, Ser434, 458–465 (GSTGAGKT), and Gln493 each bind ATP. Residues 423 to 646 (NGDNNLFFSN…RPDFSSKLMG (224 aa)) enclose the ABC transporter 1 domain. The S-palmitoyl cysteine moiety is linked to residue Cys524. Ser549 and Ser660 each carry phosphoserine. The disordered R region stretch occupies residues 654–831 (SAERRNSILT…EEINEEDLKE (178 aa)). A Phosphoserine; by PKA modification is found at Ser670. The residue at position 686 (Ser686) is a Phosphoserine. Lys688 is covalently cross-linked (Glycyl lysine isopeptide (Lys-Gly) (interchain with G-Cter in ubiquitin)). Residues Ser700 and Ser712 each carry the phosphoserine modification. At Thr717 the chain carries Phosphothreonine. 5 positions are modified to phosphoserine: Ser737, Ser768, Ser790, Ser795, and Ser813. A helical membrane pass occupies residues 859 to 879 (LIFVLIWCIVIFLAEVAASLV). In terms of domain architecture, ABC transmembrane type-1 2 spans 859–1155 (LIFVLIWCIV…AVNSSIDVDS (297 aa)). Over 880 to 918 (VLWLFGNTAPQDKENSTKSGNSSYAVIITNTSSYYFFYI) the chain is Extracellular. N-linked (GlcNAc...) asparagine glycosylation is found at Asn894, Asn900, and Asn909. Residues 919–939 (YVGVADTLLALGLFRGLPLVH) form a discontinuously helical membrane-spanning segment. The Cytoplasmic segment spans residues 940–990 (TLITVSKILHHKMLHSVLQAPMSTLNTLKAGGILNRFSKDIAILDDLLPLT). Residues 991–1011 (IFDFIQLLLIVVGAIAVVSVL) traverse the membrane as a helical segment. Topologically, residues 1012–1013 (QP) are extracellular. A helical transmembrane segment spans residues 1014–1034 (YIFLATVPVIAAFILLRAYFL). At 1035–1095 (HTSQQLKQLE…TANWFLYLST (61 aa)) the chain is on the cytoplasmic side. The chain crosses the membrane as a helical span at residues 1096–1116 (LRWFQMRIEMIFVLFFIAVAF). At 1117-1130 (ISILTTGEGEGRVG) the chain is on the extracellular side. A helical transmembrane segment spans residues 1131–1151 (IILTLAMNIMSTLQWAVNSSI). Residues 1152 to 1481 (DVDSLMRSVS…AEEEVQGTRL (330 aa)) lie on the Cytoplasmic side of the membrane. Residues 1199–1444 (VKKDDVWPSG…KSLFRQAISS (246 aa)) form the ABC transporter 2 domain. Residues Tyr1220 and 1245–1252 (GRTGSGKS) contribute to the ATP site. Residues 1387–1481 (RTLKQAFADC…AEEEVQGTRL (95 aa)) form an interaction with GORASP2 region. Cys1396 carries the S-palmitoyl cysteine lipid modification. Phosphoserine occurs at positions 1445 and 1457. Residues 1449-1481 (KLFPHRNSSKHKSRPQITALKEEAEEEVQGTRL) are disordered. Over residues 1450-1462 (LFPHRNSSKHKSR) the composition is skewed to basic residues. Positions 1471–1481 (EAEEEVQGTRL) are enriched in acidic residues. The PDZ-binding motif lies at 1479–1481 (TRL).

It belongs to the ABC transporter superfamily. ABCC family. CFTR transporter (TC 3.A.1.202) subfamily. Monomer; does not require oligomerization for channel activity. May form oligomers in the membrane. Interacts with SLC26A3, SLC26A6 and NHERF1. Interacts with SHANK2. Interacts with MYO6. Interacts (via C-terminus) with GOPC (via PDZ domain); this promotes CFTR internalization and thereby decreases channel activity. Interacts with SLC4A7 through NHERF1. Found in a complex with MYO5B and RAB11A. Interacts with ANO1. Interacts with SLC26A8. Interacts with AHCYL1; the interaction increases CFTR activity. Interacts with CSE1L. The core-glycosylated form interacts with GORASP2 (via PDZ GRASP-type 1 domain) in respone to ER stress. Interacts with MARCHF2; the interaction leads to CFTR ubiqtuitination and degradation. Interacts with ADGRG2. In terms of processing, N-glycosylated. Post-translationally, phosphorylated; cAMP treatment promotes phosphorylation and activates the channel. Dephosphorylation decreases the ATPase activity (in vitro). Phosphorylation at PKA sites activates the channel. Phosphorylation at PKC sites enhances the response to phosphorylation by PKA. Phosphorylated by AMPK; this inhibits channel activity. Ubiquitinated, leading to its degradation in the lysosome. Deubiquitination by USP10 in early endosomes enhances its endocytic recycling to the cell membrane. Ubiquitinated by RNF185 during ER stress. Ubiquitinated by MARCHF2. As to expression, isoform 1 is expressed in the pancreas. Isoform 2 is specifically expressed in the ventricle.

The protein resides in the apical cell membrane. Its subcellular location is the early endosome membrane. The protein localises to the cell membrane. It localises to the recycling endosome membrane. It is found in the endoplasmic reticulum membrane. The protein resides in the nucleus. The catalysed reaction is ATP + H2O + closed Cl(-) channel = ADP + phosphate + open Cl(-) channel.. It catalyses the reaction chloride(in) = chloride(out). It carries out the reaction hydrogencarbonate(in) = hydrogencarbonate(out). The enzyme catalyses ATP + H2O = ADP + phosphate + H(+). Functionally, epithelial ion channel that plays an important role in the regulation of epithelial ion and water transport and fluid homeostasis. Mediates the transport of chloride ions across the cell membrane. Possesses an intrinsic ATPase activity and utilizes ATP to gate its channel; the passive flow of anions through the channel is gated by cycles of ATP binding and hydrolysis by the ATP-binding domains. The ion channel is also permeable to HCO(3)(-); selectivity depends on the extracellular chloride concentration. Exerts its function also by modulating the activity of other ion channels and transporters. Contributes to the regulation of the pH and the ion content of the epithelial fluid layer. Modulates the activity of the epithelial sodium channel (ENaC) complex, in part by regulating the cell surface expression of the ENaC complex. May regulate bicarbonate secretion and salvage in epithelial cells by regulating the transporter SLC4A7. Can inhibit the chloride channel activity of ANO1. Plays a role in the chloride and bicarbonate homeostasis during sperm epididymal maturation and capacitation. This chain is Cystic fibrosis transmembrane conductance regulator, found in Oryctolagus cuniculus (Rabbit).